The sequence spans 615 residues: Dolichyl-diphosphooligosaccharide--protein glycosyltransferase subunit 1A (615 aa).

A signal peptide spans 1–28 (MATPPPLRRVAALLLLLVAAASTPTARA). Over 29–437 (DLVVTRADRK…RFNNISLLRE (409 aa)) the chain is Lumenal. Lysine 187 bears the N6-acetyllysine mark. 3 N-linked (GlcNAc...) asparagine glycosylation sites follow: asparagine 300, asparagine 353, and asparagine 431. Residues 438 to 455 (PMMLITGFFLLFMACIVY) form a helical membrane-spanning segment. Over 456 to 615 (MRTDMSISKN…ESLLEYISEI (160 aa)) the chain is Cytoplasmic.

This sequence belongs to the OST1 family. As to quaternary structure, component of the oligosaccharyltransferase (OST) complex.

Its subcellular location is the endoplasmic reticulum membrane. It participates in protein modification; protein glycosylation. In terms of biological role, subunit of the oligosaccharyl transferase (OST) complex that catalyzes the initial transfer of a defined glycan (Glc(3)Man(9)GlcNAc(2) in eukaryotes) from the lipid carrier dolichol-pyrophosphate to an asparagine residue within an Asn-X-Ser/Thr consensus motif in nascent polypeptide chains, the first step in protein N-glycosylation. N-glycosylation occurs cotranslationally and the complex associates with the Sec61 complex at the channel-forming translocon complex that mediates protein translocation across the endoplasmic reticulum (ER). All subunits are required for a maximal enzyme activity. The protein is Dolichyl-diphosphooligosaccharide--protein glycosyltransferase subunit 1A (OST1A) of Oryza sativa subsp. japonica (Rice).